We begin with the raw amino-acid sequence, 561 residues long: Bifunctional NAD(P)H-hydrate repair enzyme (561 aa).

The tract at residues 1 to 241 (MLSRISERCT…WMIAAERMDA (241 aa)) is NAD(P)H-hydrate epimerase. The 207-residue stretch at 29 to 235 (LRDAEPAAAA…SLGLEEWMIA (207 aa)) folds into the YjeF N-terminal domain. Residues 77 to 81 (NNGGD) form an NADPHX 1; for epimerase activity region. Asn-78 and Asp-145 together coordinate K(+). The interval 149-155 (GTGISGP) is NADPHX 1; for epimerase activity. The (6S)-NADPHX site is built by Tyr-160 and Asp-178. Position 181 (Ser-181) interacts with K(+). Positions 249–548 (LGDVYGYFST…PRIPFIVNAS (300 aa)) constitute a YjeF C-terminal domain. Positions 249–561 (LGDVYGYFST…SATQQRPSGL (313 aa)) are ADP-dependent (S)-NAD(P)H-hydrate dehydratase. Gly-351 lines the (6S)-NADPHX pocket. The interval 417-423 (HPGEAAR) is NADPHX 2; for dehydratase activity. ADP is bound by residues 454–458 (KGPGT) and 475–484 (NAGMASGGMG). Residue Asp-485 coordinates (6S)-NADPHX.

This sequence in the N-terminal section; belongs to the NnrE/AIBP family. The protein in the C-terminal section; belongs to the NnrD/CARKD family. K(+) serves as cofactor.

It carries out the reaction (6S)-NADHX + ADP = AMP + phosphate + NADH + H(+). It catalyses the reaction (6S)-NADPHX + ADP = AMP + phosphate + NADPH + H(+). The catalysed reaction is (6R)-NADHX = (6S)-NADHX. The enzyme catalyses (6R)-NADPHX = (6S)-NADPHX. Functionally, bifunctional enzyme that catalyzes the epimerization of the S- and R-forms of NAD(P)HX and the dehydration of the S-form of NAD(P)HX at the expense of ADP, which is converted to AMP. This allows the repair of both epimers of NAD(P)HX, a damaged form of NAD(P)H that is a result of enzymatic or heat-dependent hydration. In Leishmania braziliensis, this protein is Bifunctional NAD(P)H-hydrate repair enzyme.